Reading from the N-terminus, the 149-residue chain is Large ribosomal subunit protein bL9 (149 aa).

Belongs to the bacterial ribosomal protein bL9 family.

Binds to the 23S rRNA. The protein is Large ribosomal subunit protein bL9 of Helicobacter pylori (strain HPAG1).